A 113-amino-acid polypeptide reads, in one-letter code: Integration host factor subunit alpha (113 aa).

Positions asparagine 87–glutamate 113 are disordered. Residues valine 93 to glutamate 113 show a composition bias toward acidic residues.

The protein belongs to the bacterial histone-like protein family. Heterodimer of an alpha and a beta chain.

Functionally, this protein is one of the two subunits of integration host factor, a specific DNA-binding protein that functions in genetic recombination as well as in transcriptional and translational control. The polypeptide is Integration host factor subunit alpha (Anaeromyxobacter dehalogenans (strain 2CP-1 / ATCC BAA-258)).